The chain runs to 224 residues: UPF0111 protein TC_0063 (224 aa).

The protein belongs to the UPF0111 family.

The chain is UPF0111 protein TC_0063 from Chlamydia muridarum (strain MoPn / Nigg).